A 311-amino-acid chain; its full sequence is Coproporphyrin III ferrochelatase 1 (311 aa).

Fe-coproporphyrin III is bound by residues tyrosine 12, arginine 29, 45-46 (RY), serine 53, and tyrosine 124. Residues histidine 182 and glutamate 263 each contribute to the Fe(2+) site.

It belongs to the ferrochelatase family.

The protein resides in the cytoplasm. The enzyme catalyses Fe-coproporphyrin III + 2 H(+) = coproporphyrin III + Fe(2+). Its pathway is porphyrin-containing compound metabolism; protoheme biosynthesis. In terms of biological role, involved in coproporphyrin-dependent heme b biosynthesis. Catalyzes the insertion of ferrous iron into coproporphyrin III to form Fe-coproporphyrin III. The polypeptide is Coproporphyrin III ferrochelatase 1 (Bacillus anthracis).